The following is a 597-amino-acid chain: Myrcene synthase, chloroplastic (597 aa).

The transit peptide at 1-56 (MALKLLTSLPMYNFSRVPVSSKDPILLVTSRTRNGYLARPVQCMVANKVSTSPDIL) directs the protein to the chloroplast. (2E)-geranyl diphosphate contacts are provided by R310, D347, D351, R488, and D491. Mg(2+)-binding residues include D347 and D351. The DDXXD motif signature appears at 347–351 (DDVYD). Residues D491, T495, and E499 each contribute to the Mg(2+) site.

It belongs to the terpene synthase family. Tpsb subfamily. Mg(2+) serves as cofactor. The cofactor is Mn(2+).

The protein localises to the plastid. Its subcellular location is the chloroplast. The catalysed reaction is (2E)-geranyl diphosphate = beta-myrcene + diphosphate. Involved in monoterpene (C10) biosynthesis. The major product is myrcene followed by minor amounts (1.2%) of the cyclic monoterpene limonene. In Quercus ilex (Holly oak), this protein is Myrcene synthase, chloroplastic.